Reading from the N-terminus, the 324-residue chain is Lignin-forming anionic peroxidase (324 aa).

Residues M1–A22 form the signal peptide. Q23 bears the Pyrrolidone carboxylic acid mark. Cystine bridges form between C33/C111, C66/C71, C117/C320, and C196/C228. N35 carries an N-linked (GlcNAc...) asparagine glycan. H64 acts as the Proton acceptor in catalysis. Residues D65, V68, G70, D72, and S74 each coordinate Ca(2+). N-linked (GlcNAc...) asparagine glycosylation occurs at N150. Position 159 (P159) interacts with substrate. H189 serves as a coordination point for heme b. T190 contacts Ca(2+). N-linked (GlcNAc...) asparagine glycosylation is present at N207. The Ca(2+) site is built by D242, T245, and D250.

This sequence belongs to the peroxidase family. Classical plant (class III) peroxidase subfamily. It depends on Ca(2+) as a cofactor. Requires heme b as cofactor.

It is found in the secreted. It carries out the reaction 2 a phenolic donor + H2O2 = 2 a phenolic radical donor + 2 H2O. Removal of H(2)O(2), oxidation of toxic reductants, biosynthesis and degradation of lignin, suberization, auxin catabolism, response to environmental stresses such as wounding, pathogen attack and oxidative stress. These functions might be dependent on each isozyme/isoform in each plant tissue. In terms of biological role, plays an integral role in secondary cell wall biosynthesis by the polymerization of cinnamyl alcohols into lignin and by forming rigid cross-links between cellulose, pectin, hydroxy-proline-rich glycoproteins, and lignin. The polypeptide is Lignin-forming anionic peroxidase (Nicotiana tabacum (Common tobacco)).